A 119-amino-acid polypeptide reads, in one-letter code: Small ribosomal subunit protein bS16 (119 aa).

The protein belongs to the bacterial ribosomal protein bS16 family.

This chain is Small ribosomal subunit protein bS16, found in Amoebophilus asiaticus (strain 5a2).